A 485-amino-acid polypeptide reads, in one-letter code: Aspartyl/glutamyl-tRNA(Asn/Gln) amidotransferase subunit B (485 aa).

This sequence belongs to the GatB/GatE family. GatB subfamily. As to quaternary structure, heterotrimer of A, B and C subunits.

It catalyses the reaction L-glutamyl-tRNA(Gln) + L-glutamine + ATP + H2O = L-glutaminyl-tRNA(Gln) + L-glutamate + ADP + phosphate + H(+). The enzyme catalyses L-aspartyl-tRNA(Asn) + L-glutamine + ATP + H2O = L-asparaginyl-tRNA(Asn) + L-glutamate + ADP + phosphate + 2 H(+). Allows the formation of correctly charged Asn-tRNA(Asn) or Gln-tRNA(Gln) through the transamidation of misacylated Asp-tRNA(Asn) or Glu-tRNA(Gln) in organisms which lack either or both of asparaginyl-tRNA or glutaminyl-tRNA synthetases. The reaction takes place in the presence of glutamine and ATP through an activated phospho-Asp-tRNA(Asn) or phospho-Glu-tRNA(Gln). This chain is Aspartyl/glutamyl-tRNA(Asn/Gln) amidotransferase subunit B, found in Borrelia duttonii (strain Ly).